Here is a 271-residue protein sequence, read N- to C-terminus: Probable ribosomal RNA small subunit methyltransferase A (271 aa).

Asn-22, Leu-24, Gly-49, Glu-70, Asp-97, and Asn-112 together coordinate S-adenosyl-L-methionine.

This sequence belongs to the class I-like SAM-binding methyltransferase superfamily. rRNA adenine N(6)-methyltransferase family. RsmA subfamily.

The protein localises to the cytoplasm. Its function is as follows. Specifically dimethylates two adjacent adenosines in the loop of a conserved hairpin near the 3'-end of 16S rRNA in the 30S particle. May play a critical role in biogenesis of 30S subunits. This chain is Probable ribosomal RNA small subunit methyltransferase A, found in Methanosphaera stadtmanae (strain ATCC 43021 / DSM 3091 / JCM 11832 / MCB-3).